We begin with the raw amino-acid sequence, 461 residues long: Threonine/serine transporter ThrP (461 aa).

12 consecutive transmembrane segments (helical) span residues 17–37, 40–60, 97–117, 123–143, 156–176, 201–221, 244–264, 278–298, 333–353, 360–380, 401–421, and 430–450; these read IELI…AAST, WAGP…FFIM, WFMW…YVQF, AQWI…LAAV, IKVT…FFGF, GFLT…LIGI, ILIF…WNEI, IGIT…ALSG, VAGV…NYII, FVYV…VILI, IMFP…LIGM, and SLFV…VFGL.

This sequence belongs to the amino acid-polyamine-organocation (APC) superfamily.

It localises to the cell inner membrane. The catalysed reaction is L-threonine(in) + H(+)(in) = L-threonine(out) + H(+)(out). It carries out the reaction L-serine(in) + H(+)(in) = L-serine(out) + H(+)(out). Permease that mediates the proton-dependent threonine and serine uptake. In Salmonella typhi, this protein is Threonine/serine transporter ThrP.